Consider the following 53-residue polypeptide: Light-harvesting protein B-800/820 alpha chain (53 aa).

Over 1–14 (MNQGKIWTVVNPAV) the chain is Cytoplasmic. The chain crosses the membrane as a helical span at residues 15-35 (GLPLLLGSVAITALLVHLAVL). H31 contributes to the a bacteriochlorophyll binding site. Over 36–53 (THTTWFPAFTQGGLKKAA) the chain is Periplasmic.

Belongs to the antenna complex alpha subunit family. In terms of assembly, the core complex is formed by different alpha and beta chains, binding bacteriochlorophyll molecules, and arranged most probably in tetrameric structures disposed around the reaction center. The non-pigmented gamma chains may constitute additional components.

The protein localises to the cell inner membrane. Its function is as follows. Antenna complexes are light-harvesting systems, which transfer the excitation energy to the reaction centers. This Rhodoblastus acidophilus (Rhodopseudomonas acidophila) protein is Light-harvesting protein B-800/820 alpha chain.